The chain runs to 571 residues: UvrABC system protein C (571 aa).

The GIY-YIG domain occupies 15 to 93 (TSPGVYLWKD…IDRYNPEFNI (79 aa)). Positions 184 to 219 (NNYINELTNKMHQAANNMQFELALFLRDGLTYLKKL) constitute a UVR domain.

The protein belongs to the UvrC family. Interacts with UvrB in an incision complex.

It is found in the cytoplasm. The UvrABC repair system catalyzes the recognition and processing of DNA lesions. UvrC both incises the 5' and 3' sides of the lesion. The N-terminal half is responsible for the 3' incision and the C-terminal half is responsible for the 5' incision. This is UvrABC system protein C from Mycoplasmopsis bovis (strain ATCC 25523 / DSM 22781 / NCTC 10131 / PG45) (Mycoplasma bovis).